The sequence spans 154 residues: MANIIEGKLNAEGFKFGIIVSRFNSFICDRLVEGALDTLVRHGAADGDIDILRVPGAFEIPVAAQKAAASKRYDALICLGAVIRGSTPHFDYVCAEVSKGVASVSLDSGMPVSFGVITTDSIEQAIERAGTKAGNKGTDAAITAIEMVNLFKVI.

5-amino-6-(D-ribitylamino)uracil contacts are provided by residues Phe23, 57–59 (AFE), and 81–83 (AVI). A (2S)-2-hydroxy-3-oxobutyl phosphate-binding site is contributed by 86 to 87 (ST). His89 functions as the Proton donor in the catalytic mechanism. 5-amino-6-(D-ribitylamino)uracil is bound at residue Phe114. Arg128 provides a ligand contact to (2S)-2-hydroxy-3-oxobutyl phosphate.

It belongs to the DMRL synthase family.

It catalyses the reaction (2S)-2-hydroxy-3-oxobutyl phosphate + 5-amino-6-(D-ribitylamino)uracil = 6,7-dimethyl-8-(1-D-ribityl)lumazine + phosphate + 2 H2O + H(+). Its pathway is cofactor biosynthesis; riboflavin biosynthesis; riboflavin from 2-hydroxy-3-oxobutyl phosphate and 5-amino-6-(D-ribitylamino)uracil: step 1/2. Its function is as follows. Catalyzes the formation of 6,7-dimethyl-8-ribityllumazine by condensation of 5-amino-6-(D-ribitylamino)uracil with 3,4-dihydroxy-2-butanone 4-phosphate. This is the penultimate step in the biosynthesis of riboflavin. The sequence is that of 6,7-dimethyl-8-ribityllumazine synthase from Syntrophotalea carbinolica (strain DSM 2380 / NBRC 103641 / GraBd1) (Pelobacter carbinolicus).